A 123-amino-acid chain; its full sequence is UPF0102 protein APP7_1414 (123 aa).

Belongs to the UPF0102 family.

The protein is UPF0102 protein APP7_1414 of Actinobacillus pleuropneumoniae serotype 7 (strain AP76).